The chain runs to 236 residues: uncharacterized protein (236 aa).

Over residues 1-12 (MKLLGHRKSHGH) the composition is skewed to basic residues. Residues 1–108 (MKLLGHRKSH…KAANRARMTE (108 aa)) form a disordered region. Over residues 13–31 (QRADASPDAGSKDGCRPDS) the composition is skewed to basic and acidic residues. Over residues 32-47 (GRTSGSDTSRGSQTTG) the composition is skewed to low complexity. Residues 52-65 (PTPKRNQSRRHTKK) show a composition bias toward basic residues. The segment covering 67–78 (PVAPAPMTAAQA) has biased composition (low complexity). Residues 90-108 (LSREERRAEKAANRARMTE) show a composition bias toward basic and acidic residues. A run of 2 helical transmembrane segments spans residues 142–162 (NLLG…FAVP) and 166–186 (FYLS…AIIL).

It is found in the cell membrane. This is an uncharacterized protein from Mycobacterium tuberculosis (strain CDC 1551 / Oshkosh).